The primary structure comprises 275 residues: ATP synthase subunit delta (275 aa).

Belongs to the ATPase delta chain family. In terms of assembly, F-type ATPases have 2 components, F(1) - the catalytic core - and F(0) - the membrane proton channel. F(1) has five subunits: alpha(3), beta(3), gamma(1), delta(1), epsilon(1). F(0) has three main subunits: a(1), b(2) and c(10-14). The alpha and beta chains form an alternating ring which encloses part of the gamma chain. F(1) is attached to F(0) by a central stalk formed by the gamma and epsilon chains, while a peripheral stalk is formed by the delta and b chains.

It localises to the cell membrane. Functionally, f(1)F(0) ATP synthase produces ATP from ADP in the presence of a proton or sodium gradient. F-type ATPases consist of two structural domains, F(1) containing the extramembraneous catalytic core and F(0) containing the membrane proton channel, linked together by a central stalk and a peripheral stalk. During catalysis, ATP synthesis in the catalytic domain of F(1) is coupled via a rotary mechanism of the central stalk subunits to proton translocation. In terms of biological role, this protein is part of the stalk that links CF(0) to CF(1). It either transmits conformational changes from CF(0) to CF(1) or is implicated in proton conduction. The polypeptide is ATP synthase subunit delta (Bifidobacterium adolescentis (strain ATCC 15703 / DSM 20083 / NCTC 11814 / E194a)).